The chain runs to 370 residues: Capsular polysaccharide phosphotransferase (370 aa).

Belongs to the stealth family.

Functionally, part of a capsular polysaccharide synthesis locus. In Actinobacillus suis, this protein is Capsular polysaccharide phosphotransferase.